The primary structure comprises 359 residues: Dual-specificity RNA methyltransferase RlmN 1 (359 aa).

The Proton acceptor role is filled by Glu96. The 234-residue stretch at 102–335 (FKGRATVCIS…STVRQRRGID (234 aa)) folds into the Radical SAM core domain. A disulfide bridge links Cys109 with Cys340. Positions 116, 120, and 123 each coordinate [4Fe-4S] cluster. S-adenosyl-L-methionine-binding positions include 166–167 (GE), Ser198, 221–223 (SLH), and Asn297. Cys340 acts as the S-methylcysteine intermediate in catalysis.

The protein belongs to the radical SAM superfamily. RlmN family. It depends on [4Fe-4S] cluster as a cofactor.

The protein resides in the cytoplasm. It catalyses the reaction adenosine(2503) in 23S rRNA + 2 reduced [2Fe-2S]-[ferredoxin] + 2 S-adenosyl-L-methionine = 2-methyladenosine(2503) in 23S rRNA + 5'-deoxyadenosine + L-methionine + 2 oxidized [2Fe-2S]-[ferredoxin] + S-adenosyl-L-homocysteine. The enzyme catalyses adenosine(37) in tRNA + 2 reduced [2Fe-2S]-[ferredoxin] + 2 S-adenosyl-L-methionine = 2-methyladenosine(37) in tRNA + 5'-deoxyadenosine + L-methionine + 2 oxidized [2Fe-2S]-[ferredoxin] + S-adenosyl-L-homocysteine. Specifically methylates position 2 of adenine 2503 in 23S rRNA and position 2 of adenine 37 in tRNAs. m2A2503 modification seems to play a crucial role in the proofreading step occurring at the peptidyl transferase center and thus would serve to optimize ribosomal fidelity. The protein is Dual-specificity RNA methyltransferase RlmN 1 of Myxococcus xanthus (strain DK1622).